Reading from the N-terminus, the 332-residue chain is Probable electron transfer flavoprotein subunit alpha, mitochondrial (332 aa).

275–303 (LYIAIGISGAIQHLAGMKDSKVIVAINKD) contributes to the FAD binding site.

It belongs to the ETF alpha-subunit/FixB family. In terms of assembly, heterodimer of an alpha and a beta subunit. FAD serves as cofactor.

It is found in the mitochondrion matrix. Its function is as follows. The electron transfer flavoprotein serves as a specific electron acceptor for several dehydrogenases, including five acyl-CoA dehydrogenases, glutaryl-CoA and sarcosine dehydrogenase. It transfers the electrons to the main mitochondrial respiratory chain via ETF-ubiquinone oxidoreductase (ETF dehydrogenase). In Caenorhabditis elegans, this protein is Probable electron transfer flavoprotein subunit alpha, mitochondrial.